A 114-amino-acid polypeptide reads, in one-letter code: Large ribosomal subunit protein bL19 (114 aa).

The protein belongs to the bacterial ribosomal protein bL19 family.

Its function is as follows. This protein is located at the 30S-50S ribosomal subunit interface and may play a role in the structure and function of the aminoacyl-tRNA binding site. The polypeptide is Large ribosomal subunit protein bL19 (rplS) (Listeria monocytogenes serovar 1/2a (strain ATCC BAA-679 / EGD-e)).